Consider the following 1074-residue polypeptide: Transmembrane protein 132E (1074 aa).

Positions 1-25 (MAPGMSGRGGAALLCLSALLAHASG) are cleaved as a signal peptide. Residues 26 to 893 (RSHPASPSPP…LTDLEIGMYA (868 aa)) lie on the Extracellular side of the membrane. N-linked (GlcNAc...) asparagine glycosylation is found at Asn70 and Asn91. Disordered stretches follow at residues 202 to 226 (PPAPAAPPTARRKSPDGLEPEATGE) and 241 to 264 (ASGGCGGSRRGAGPGVGARAESPT). A compositionally biased stretch (gly residues) spans 243–256 (GGCGGSRRGAGPGV). N-linked (GlcNAc...) asparagine glycans are attached at residues Asn318 and Asn399. Disordered regions lie at residues 563-585 (RSVRESEDEDEEEEERRQSASRG) and 814-867 (GRDE…VPPT). The segment covering 841-862 (GAGPPGSALPAPEAPGPGTASP) has biased composition (low complexity). Residues 894 to 914 (LLGVFCLAILVFLINCIVFVL) form a helical membrane-spanning segment. Residues 915 to 1074 (RYRHKRIPPE…NYMRRIKEIA (160 aa)) are Cytoplasmic-facing. The tract at residues 946 to 1063 (VQGELSPPAG…PTRPTAPPDL (118 aa)) is disordered. A compositionally biased stretch (low complexity) spans 972-984 (SGSSQTSVQSQVH). Residues 1034–1044 (GEEDEEEEEDL) show a composition bias toward acidic residues.

It belongs to the TMEM132 family.

The protein localises to the membrane. In terms of biological role, required for normal inner ear hair cell function and hearing. This Homo sapiens (Human) protein is Transmembrane protein 132E.